A 453-amino-acid polypeptide reads, in one-letter code: tRNA modification GTPase MnmE (453 aa).

Residues arginine 23, glutamate 80, and lysine 120 each contribute to the (6S)-5-formyl-5,6,7,8-tetrahydrofolate site. One can recognise a TrmE-type G domain in the interval 216–375; the sequence is GSKIVIIGKP…LIKYLKDLNC (160 aa). Asparagine 226 is a binding site for K(+). Residues 226–231, 245–251, and 270–273 each bind GTP; these read NSGKSS, TSIEGTT, and DTAG. Serine 230 contributes to the Mg(2+) binding site. Positions 245, 247, and 250 each coordinate K(+). Threonine 251 serves as a coordination point for Mg(2+). Lysine 453 provides a ligand contact to (6S)-5-formyl-5,6,7,8-tetrahydrofolate.

It belongs to the TRAFAC class TrmE-Era-EngA-EngB-Septin-like GTPase superfamily. TrmE GTPase family. In terms of assembly, homodimer. Heterotetramer of two MnmE and two MnmG subunits. K(+) is required as a cofactor.

Its subcellular location is the cytoplasm. Exhibits a very high intrinsic GTPase hydrolysis rate. Involved in the addition of a carboxymethylaminomethyl (cmnm) group at the wobble position (U34) of certain tRNAs, forming tRNA-cmnm(5)s(2)U34. This is tRNA modification GTPase MnmE from Wigglesworthia glossinidia brevipalpis.